The primary structure comprises 134 residues: UPF0412 protein YaaI (134 aa).

An N-terminal signal peptide occupies residues 1–23; the sequence is MKSVFTISASLAISLMLCCTAQA.

It belongs to the UPF0412 family.

The chain is UPF0412 protein YaaI from Escherichia coli (strain K12).